A 450-amino-acid polypeptide reads, in one-letter code: Protein tailless (450 aa).

The nuclear receptor DNA-binding region spans 31–108 (HVPCKVCRDH…VGMNKDAVQH (78 aa)). NR C4-type zinc fingers lie at residues 34 to 54 (CKVC…CDGC) and 70 to 96 (CKSQ…LRKC). Positions 187–448 (VPRVPHHPVH…RLISDMYSQR (262 aa)) constitute an NR LBD domain.

Belongs to the nuclear hormone receptor family. NR2 subfamily. In terms of assembly, monomer.

It is found in the nucleus. Orphan receptor that binds DNA as a monomer to hormone response elements (HRE) containing an extended core motif half-site sequence 5'-AAGTCA-3' in which the 5' flanking nucleotides participate in determining receptor specificity. This receptor binds to the consensus sequence [AG][AG]AAGTCAA. Plays a key role in the establishment of non-metameric domains at the anterior and posterior poles of the embryo. It may also play a role in the nervous system. The maternal terminal pathway activates the tll gene in the termini; TLL activity then represses segmentation and activates terminal-specific genes in these domains. Involved in the regulation of early eye development. In the embryonic visual system anlage drives cells to optic lobe as opposed to Bolwig's organ fate. The sequence is that of Protein tailless (tll) from Drosophila virilis (Fruit fly).